Reading from the N-terminus, the 327-residue chain is Aquaporin-1 (327 aa).

Residues 1-34 (MSSNDSNDTDKQHTRLDPTGVDDAYIPPEQPETK) form a disordered region. Topologically, residues 1–48 (MSSNDSNDTDKQHTRLDPTGVDDAYIPPEQPETKHHRFKISRDTLRNH) are cytoplasmic. The chain crosses the membrane as a helical span at residues 49-69 (FIAAVGEFCGTFMFLWCAYVI). The Extracellular portion of the chain corresponds to 70-91 (CNVANHDVALVAAPDGSHPGQL). The helical transmembrane segment at 92 to 112 (IMIAIGFGFSVMFSIWCFAGV) threads the bilayer. Residues 113–136 (SGGALNPAVSLSLCLARAVSPTRC) lie on the Cytoplasmic side of the membrane. The NPA 1 motif lies at 118–120 (NPA). A helical membrane pass occupies residues 137–157 (VVMWVSQIVAGMAAGGAASAM). Topologically, residues 158–176 (TPGEVLFANSLGLGCSRTR) are extracellular. Residues 177-197 (GLFLEMFGTAILCLTVLMTAV) form a helical membrane-spanning segment. Residues 198–203 (EKRETN) are Cytoplasmic-facing. Residues 204–224 (FMAALPIGISLFIAHVALTAY) traverse the membrane as a helical segment. Over 225–248 (TGTGVNPARSLGAAVAARYFPHYH) the chain is Extracellular. The NPA 2 signature appears at 230 to 232 (NPA). The chain crosses the membrane as a helical span at residues 249-269 (WIYWIGPLLGSILAWSVWQLL). At 270–327 (QILDYTTYVTAEKAASTKEKAQKKVKPAVPLLWLKSNFPLLFFISRSLALNVIIFGKN) the chain is on the cytoplasmic side.

It belongs to the MIP/aquaporin (TC 1.A.8) family.

It localises to the endoplasmic reticulum membrane. Its subcellular location is the cell membrane. In terms of biological role, water channel required to facilitate the transport of water across membranes. Involved in sporulation, freeze tolerance and osmotolerance. Is non-functional in most laboratory strains. This chain is Aquaporin-1 (AQY1), found in Saccharomyces cerevisiae (Baker's yeast).